Reading from the N-terminus, the 486-residue chain is Cobyric acid synthase (486 aa).

One can recognise a GATase cobBQ-type domain in the interval 248-435 (VLNVVVPVLP…LHGLFESPAA (188 aa)). C329 serves as the catalytic Nucleophile. H427 is a catalytic residue.

It belongs to the CobB/CobQ family. CobQ subfamily.

It functions in the pathway cofactor biosynthesis; adenosylcobalamin biosynthesis. Catalyzes amidations at positions B, D, E, and G on adenosylcobyrinic A,C-diamide. NH(2) groups are provided by glutamine, and one molecule of ATP is hydrogenolyzed for each amidation. In Pseudomonas syringae pv. tomato (strain ATCC BAA-871 / DC3000), this protein is Cobyric acid synthase.